A 107-amino-acid polypeptide reads, in one-letter code: Phosphoribosyl-ATP pyrophosphatase (107 aa).

This sequence belongs to the PRA-PH family.

The protein resides in the cytoplasm. It carries out the reaction 1-(5-phospho-beta-D-ribosyl)-ATP + H2O = 1-(5-phospho-beta-D-ribosyl)-5'-AMP + diphosphate + H(+). It functions in the pathway amino-acid biosynthesis; L-histidine biosynthesis; L-histidine from 5-phospho-alpha-D-ribose 1-diphosphate: step 2/9. The chain is Phosphoribosyl-ATP pyrophosphatase (hisE) from Neisseria meningitidis serogroup A / serotype 4A (strain DSM 15465 / Z2491).